Reading from the N-terminus, the 160-residue chain is Cytochrome b6-f complex subunit 4 (160 aa).

Helical transmembrane passes span 36 to 56 (LLYM…GLAV), 95 to 115 (LLGV…PFIE), and 131 to 151 (TVFL…CLPI).

It belongs to the cytochrome b family. PetD subfamily. The 4 large subunits of the cytochrome b6-f complex are cytochrome b6, subunit IV (17 kDa polypeptide, petD), cytochrome f and the Rieske protein, while the 4 small subunits are petG, petL, petM and petN. The complex functions as a dimer.

The protein localises to the plastid. It is found in the chloroplast thylakoid membrane. In terms of biological role, component of the cytochrome b6-f complex, which mediates electron transfer between photosystem II (PSII) and photosystem I (PSI), cyclic electron flow around PSI, and state transitions. The protein is Cytochrome b6-f complex subunit 4 of Tupiella akineta (Green alga).